The chain runs to 1020 residues: Nucleotide-binding oligomerization domain-containing protein 2 (1020 aa).

CARD domains follow at residues 6-104 (CDMC…GSWD) and 106-200 (HSLH…AECQ). Positions 43 to 57 (WDVLSREDYEGLSLP) match the ATG16L1-binding motif motif. ADP contacts are provided by Thr-219, Tyr-232, Thr-233, Gly-282, Ser-283, Gly-284, Lys-285, Ser-286, and Thr-287. Residues 221–254 (DGSENLCLEDIYTENILELQTEVGTAGALQKSPA) are required for CARD9 binding. The 328-residue stretch at 273–600 (DTILVVGEAG…AAFYLAVSAD (328 aa)) folds into the NACHT domain. A lipid anchor (S-palmitoyl cysteine) is attached at Cys-375. Residue His-583 participates in ADP binding. LRR repeat units lie at residues 685–709 (ARARSCLAHSLREHFHSIPPAVPGE), 726–749 (LYEMQEEQLAQEAVRRLDIGHLKL), 766–792 (LQHLQRPVALQLDYNSVGDVGVEQLRP), 794–817 (LGVCTALYLRDNNISDRGARTLVE), 822–845 (CEQLQKLALFNNKLTDACACSMAK), 850–873 (KQNFLSLRVGNNHITAAGAEVLAQ), 906–929 (HQNLKWLSLVGNNIGSMGAEALAL), 934–962 (NKSLEELCLEENHICDEGVYSLAEGLKRN), 963–985 (STLKFLKLSNNGITYRGAEALLQ), and 1005–1019 (LEEIQTLSSRDARLL).

The protein belongs to the NOD1-NOD2 family. In terms of assembly, homooligomer: homooligomerizes following muramyl dipeptide (MDP)-binding, promoting RIPK2 recruitment. Interacts (via CARD domain) with RIPK2 (via CARD domain). Following RIPK2 recruitment, RIPK2 homooligomerizes via its CARD domain and forms long filaments named RIPosomes. Interacts (via CARD domain) with ubiquitin; inhibiting interaction with RIPK2. Component of a signaling complex consisting of ARHGEF2, NOD2 and RIPK2. Interacts with ANKRD17 (via N-terminus). Interacts with HSPA1A; the interaction enhances NOD2 stability. Interacts (via both CARD domains) with HSP90; the interaction enhances NOD2 stability. Interacts (via CARD domain) with SOCS3; the interaction promotes NOD2 degradation. Interacts (via CARD domain) with ERBIN; the interaction inhibits activation of NOD2. Interacts with MAPKBP1; the interaction is enhanced in the presence of muramyl dipeptide (MDP) and inhibits NOD2 homooligomerization and activation. Interacts with INAVA; the interaction takes place upon Pattern recognition receptor (PRR) stimulation. Interacts (via NACHT domain) with CARD9. Interacts (via CARD domain) with CASP1; this interaction leads to IL1B processing. Also interacts with CASP4. Interacts with NLRP1; this interaction is enhanced in the presence of muramyl dipeptide (MDP) and leads to increased IL1B release. Interacts with NLRP12; this interaction promotes degradation of NOD2 through the ubiquitin-proteasome pathway. Interacts with ANKHD1, C10orf67, CHMP5, DOCK7, ENTR1, KRT15, LDOC1, PPP1R12C, PPP2R3B, TRIM41 and VIM. Interacts with MAVS; interaction takes place following single-stranded RNA (ssRNA)-binding. Interacts with ATG16L1. Interacts with Irgm1; promoting Irgm1 'Lys-63'-linked polyubiquitination, which is required for interactions with the core autophagy factors. Palmitoylated by ZDHHC5; palmitoylation is required for proper recruitment to the bacterial entry site and hence for proper signaling upon cognate peptidoglycan detection. Palmitoylation promotes localization to the cell membrane. Palmitoylation protects from SQSTM1/p62-dependent autophagic degradation. In terms of processing, polyubiquitinated by TRIM27, leading to proteasome-mediated degradation. Polyubiquitinated and degraded following muramyl dipeptide (MDP) stimulation, conferring MDP tolerance and preventing septic shock. Post-translationally, degraded via selective autophagy following interaction with Irgm1. Irgm1 promotes NOD2-RIPK2 RIPosome recruitment to autophagosome membranes, promoting their SQSTM1/p62-dependent autophagic degradation. O-glycosylated by OGT, O-GlcNAcylation increases protein stability. In terms of tissue distribution, expressed in monocytes, macrophages, dendritic cells, hepatocytes, preadipocytes, epithelial cells of oral cavity, lung and intestine. In intestine, highly expressed in ileal Paneth cells of the crypt and in intestinal stem cells. Also expressed in neurons of several brain regions including the hypothalamus.

It localises to the cell membrane. The protein resides in the basolateral cell membrane. It is found in the cytoplasm. The protein localises to the mitochondrion. With respect to regulation, ADP-binding promotes an inactive closed conformation. Functionally, pattern recognition receptor (PRR) that detects bacterial peptidoglycan fragments and other danger signals and plays an important role in gastrointestinal immunity. Specifically activated by muramyl dipeptide (MDP), a fragment of bacterial peptidoglycan found in every bacterial peptidoglycan type. NOD2 specifically recognizes and binds 6-O-phospho-MDP, the phosphorylated form of MDP, which is generated by NAGK. 6-O-phospho-MDP-binding triggers oligomerization that facilitates the binding and subsequent activation of the proximal adapter receptor-interacting RIPK2. Following recruitment, RIPK2 undergoes 'Met-1'- (linear) and 'Lys-63'-linked polyubiquitination by E3 ubiquitin-protein ligases XIAP, BIRC2, BIRC3 and the LUBAC complex, becoming a scaffolding protein for downstream effectors, triggering activation of the NF-kappa-B and MAP kinases signaling. This in turn leads to the transcriptional activation of hundreds of genes involved in immune response. Its ability to detect bacterial MDP plays a central role in maintaining the equilibrium between intestinal microbiota and host immune responses to control inflammation. An imbalance in this relationship results in dysbiosis, whereby pathogenic bacteria prevail on commensals, causing damage in the intestinal epithelial barrier as well as allowing bacterial invasion and inflammation. Acts as a regulator of appetite by sensing MDP in a subset of brain neurons: microbiota-derived MDP reach the brain, where they bind and activate NOD2 in inhibitory hypothalamic neurons, decreasing neuronal activity, thereby regulating satiety and body temperature. NOD2-dependent MDP-sensing of bacterial cell walls in the intestinal epithelial compartment contributes to sustained postnatal growth upon undernutrition. Also plays a role in antiviral response by acting as a sensor of single-stranded RNA (ssRNA) from viruses: upon ssRNA-binding, interacts with MAVS, leading to activation of interferon regulatory factor-3/IRF3 and expression of type I interferon. Also acts as a regulator of autophagy in dendritic cells via its interaction with ATG16L1, possibly by recruiting ATG16L1 at the site of bacterial entry. NOD2 activation in the small intestine crypt also contributes to intestinal stem cells survival and function: acts by promoting mitophagy via its association with ATG16L1. In addition to its main role in innate immunity, also regulates the adaptive immune system by acting as regulator of helper T-cell and regulatory T-cells (Tregs). Besides recognizing pathogens, also involved in the endoplasmic reticulum stress response: acts by sensing and binding to the cytosolic metabolite sphingosine-1-phosphate generated in response to endoplasmic reticulum stress, initiating an inflammation process that leads to activation of the NF-kappa-B and MAP kinases signaling. May also be involved in NLRP1 activation following activation by MDP, leading to CASP1 activation and IL1B release in macrophages. The chain is Nucleotide-binding oligomerization domain-containing protein 2 from Mus musculus (Mouse).